Reading from the N-terminus, the 112-residue chain is Lutropin subunit beta (112 aa).

Intrachain disulfides connect C4/C52, C18/C67, C21/C105, C29/C83, C33/C85, and C88/C95. N8 carries N-linked (GlcNAc...) asparagine glycosylation.

Belongs to the glycoprotein hormones subunit beta family. Heterodimer of a common alpha chain and a unique beta chain which confers biological specificity to thyrotropin, lutropin, follitropin and gonadotropin.

It is found in the secreted. The polypeptide is Lutropin subunit beta (lhb) (Aquarana catesbeiana (American bullfrog)).